The following is a 99-amino-acid chain: Large ribosomal subunit protein uL23 (99 aa).

It belongs to the universal ribosomal protein uL23 family. Part of the 50S ribosomal subunit. Contacts protein L29, and trigger factor when it is bound to the ribosome.

Its function is as follows. One of the early assembly proteins it binds 23S rRNA. One of the proteins that surrounds the polypeptide exit tunnel on the outside of the ribosome. Forms the main docking site for trigger factor binding to the ribosome. The protein is Large ribosomal subunit protein uL23 of Leifsonia xyli subsp. xyli (strain CTCB07).